The primary structure comprises 290 residues: Pyridoxal kinase PdxY (290 aa).

Substrate contacts are provided by residues Ser12 and 47-48 (TQ). Residues Asp114, Glu151, Lys184, and 211–214 (RPLL) each bind ATP. Asp225 lines the substrate pocket.

This sequence belongs to the pyridoxine kinase family. PdxY subfamily. In terms of assembly, homodimer. Mg(2+) is required as a cofactor.

It carries out the reaction pyridoxal + ATP = pyridoxal 5'-phosphate + ADP + H(+). It functions in the pathway cofactor metabolism; pyridoxal 5'-phosphate salvage; pyridoxal 5'-phosphate from pyridoxal: step 1/1. Pyridoxal kinase involved in the salvage pathway of pyridoxal 5'-phosphate (PLP). Catalyzes the phosphorylation of pyridoxal to PLP. The protein is Pyridoxal kinase PdxY of Pseudomonas fluorescens (strain Pf0-1).